Consider the following 335-residue polypeptide: Ketol-acid reductoisomerase (NADP(+)) 2 (335 aa).

One can recognise a KARI N-terminal Rossmann domain in the interval 1–180 (MKTYYEQDAN…GCTRAGVIET (180 aa)). NADP(+) is bound by residues 24 to 27 (YGSQ), Arg-47, Ser-51, and 81 to 84 (DEQQ). His-106 is an active-site residue. Gly-132 serves as a coordination point for NADP(+). The region spanning 181–326 (TFQEETETDL…EELREMMSWI (146 aa)) is the KARI C-terminal knotted domain. Residues Asp-189, Glu-193, Glu-225, and Glu-229 each contribute to the Mg(2+) site. Ser-250 contributes to the substrate binding site.

Belongs to the ketol-acid reductoisomerase family. It depends on Mg(2+) as a cofactor.

It carries out the reaction (2R)-2,3-dihydroxy-3-methylbutanoate + NADP(+) = (2S)-2-acetolactate + NADPH + H(+). It catalyses the reaction (2R,3R)-2,3-dihydroxy-3-methylpentanoate + NADP(+) = (S)-2-ethyl-2-hydroxy-3-oxobutanoate + NADPH + H(+). The protein operates within amino-acid biosynthesis; L-isoleucine biosynthesis; L-isoleucine from 2-oxobutanoate: step 2/4. It participates in amino-acid biosynthesis; L-valine biosynthesis; L-valine from pyruvate: step 2/4. Involved in the biosynthesis of branched-chain amino acids (BCAA). Catalyzes an alkyl-migration followed by a ketol-acid reduction of (S)-2-acetolactate (S2AL) to yield (R)-2,3-dihydroxy-isovalerate. In the isomerase reaction, S2AL is rearranged via a Mg-dependent methyl migration to produce 3-hydroxy-3-methyl-2-ketobutyrate (HMKB). In the reductase reaction, this 2-ketoacid undergoes a metal-dependent reduction by NADPH to yield (R)-2,3-dihydroxy-isovalerate. The polypeptide is Ketol-acid reductoisomerase (NADP(+)) 2 (Bacillus anthracis).